We begin with the raw amino-acid sequence, 4062 residues long: Transcription-associated protein 1 (4062 aa).

The interval 531-562 (LASEPSTSEDADESGGDPNKLPPPTKEGKKTS) is disordered. 2 TPR repeats span residues 1346 to 1379 (LDGVQNYMFNCPDGFDFEKDMDMYKRYLSHLLDI) and 1677 to 1714 (RRSFIRRIIVYQSSGPLRQEFMDTPEYFEKLIDLDDEE). Positions 2659–2670 (VETEMKREEPEP) are enriched in basic and acidic residues. A disordered region spans residues 2659 to 2692 (VETEMKREEPEPMEVDEKDSQDDSKDAGEPKEKE). Positions 2671-2680 (MEVDEKDSQD) are enriched in acidic residues. The span at 2681–2692 (DSKDAGEPKEKE) shows a compositional bias: basic and acidic residues. One can recognise an FAT domain in the interval 2800 to 3411 (LIEFISSKHE…FYHIREAVSV (612 aa)). The stretch at 2847–2880 (IETLESLGTLYNEISEFDQFAAIWERRAVFPDTM) is one TPR 3 repeat. The PI3K/PI4K catalytic domain occupies 3682-4046 (EPNFEIVIKG…DCVSLISRAK (365 aa)). Positions 3688–3694 (VIKGGQV) are G-loop. Residues 3902–3910 (NLTPMGPDQ) form a catalytic loop region. An activation loop region spans residues 3922-3950 (NPSYRFEIRGGRSLHDIQHFGHEVPFRLT). The FATC domain maps to 4031–4062 (AKLRKDDCVSLISRAKDSDNLARMPPTYHAWF).

Belongs to the PI3/PI4-kinase family. TRA1 subfamily. Interacts with histone acetyltransferase Tip60 homolog mys-1. Probably a component of a complex with histone acetyltransferase (HAT) activity, at least composed of mys-1 and trr-1. Expressed in germ cells and somatic cells.

The protein resides in the nucleus. It is found in the chromosome. Influences germ cell fate in hermaphrodites. Acts downstream of tra-2 and tra-3 and through the Tip60 histone acetyltransferase complex to regulate germ cell fate decisions. Required for spermatogenesis and embryonic development. Acts with tra-2 to promote expression of fog-3 and control male tail development. Involved in the negative regulation of vulval development. Involved in the positive regulation of transcription factor daf-16, probably acting by histone acetylation; thereby modulating stress resistance. Plays a role in acetylation of nucleosomal histone H4, probably acting as a component of the Tip60 histone acetyltransferase complex. This chain is Transcription-associated protein 1, found in Caenorhabditis elegans.